Reading from the N-terminus, the 671-residue chain is DNA ligase (671 aa).

NAD(+) contacts are provided by residues 32-36 (DAEYD), 81-82 (SL), and Glu113. Lys115 acts as the N6-AMP-lysine intermediate in catalysis. NAD(+) is bound by residues Arg136, Glu173, Lys290, and Lys314. 4 residues coordinate Zn(2+): Cys408, Cys411, Cys426, and Cys432. One can recognise a BRCT domain in the interval 593–671 (EIDSPFAGKT…EAEMLRLLGS (79 aa)).

The protein belongs to the NAD-dependent DNA ligase family. LigA subfamily. Mg(2+) is required as a cofactor. Requires Mn(2+) as cofactor.

The catalysed reaction is NAD(+) + (deoxyribonucleotide)n-3'-hydroxyl + 5'-phospho-(deoxyribonucleotide)m = (deoxyribonucleotide)n+m + AMP + beta-nicotinamide D-nucleotide.. In terms of biological role, DNA ligase that catalyzes the formation of phosphodiester linkages between 5'-phosphoryl and 3'-hydroxyl groups in double-stranded DNA using NAD as a coenzyme and as the energy source for the reaction. It is essential for DNA replication and repair of damaged DNA. The chain is DNA ligase from Shigella dysenteriae serotype 1 (strain Sd197).